Reading from the N-terminus, the 501-residue chain is Glycogenin-2 (501 aa).

UDP-binding residues include L42, T44, N45, Y48, and R110. Residues L42, T44, N45, Y48, R110, K119, D135, A136, D137, N166, S167, D193, D196, and Q197 each contribute to the UDP-alpha-D-glucose site. UDP is bound by residues D135, A136, and D137. Residue D135 coordinates Mn(2+). D137 provides a ligand contact to Mn(2+). The O-linked (Glc...) tyrosine glycan is linked to Y228. UDP is bound by residues H245, G248, and K251. H245 is a binding site for Mn(2+). UDP-alpha-D-glucose contacts are provided by G248 and K251. 3 positions are modified to phosphoserine: S368, S399, and S459.

In terms of assembly, homodimer, tightly complexed to glycogen synthase. The cofactor is Mn(2+). In terms of processing, self-glycosylated by the transfer of glucose residues from UDP-glucose to itself, forming an alpha-1,4-glycan of around 10 residues attached to Tyr-228. As to expression, detected in liver (at protein level). Expressed preferentially in liver, heart, and pancreas.

Its subcellular location is the cytoplasm. It is found in the nucleus. It catalyses the reaction L-tyrosyl-[glycogenin] + UDP-alpha-D-glucose = alpha-D-glucosyl-L-tyrosyl-[glycogenin] + UDP + H(+). The enzyme catalyses [1,4-alpha-D-glucosyl](n)-L-tyrosyl-[glycogenin] + UDP-alpha-D-glucose = [1,4-alpha-D-glucosyl](n+1)-L-tyrosyl-[glycogenin] + UDP + H(+). Its pathway is glycan biosynthesis; glycogen biosynthesis. Glycogenin participates in the glycogen biosynthetic process along with glycogen synthase and glycogen branching enzyme. It catalyzes the formation of a short alpha (1,4)-glucosyl chain covalently attached via a glucose 1-O-tyrosyl linkage to internal tyrosine residues and these chains act as primers for the elongation reaction catalyzed by glycogen synthase. In Homo sapiens (Human), this protein is Glycogenin-2 (GYG2).